The primary structure comprises 535 residues: CTP synthase (535 aa).

An amidoligase domain region spans residues 1 to 267 (MTKYIFVTGG…DQIVCDHLKL (267 aa)). Position 13 (Ser-13) interacts with CTP. Ser-13 provides a ligand contact to UTP. An ATP-binding site is contributed by 14–19 (SLGKGI). Residue Tyr-54 participates in L-glutamine binding. Residue Asp-71 participates in ATP binding. The Mg(2+) site is built by Asp-71 and Glu-141. CTP-binding positions include 148–150 (DIE), 188–193 (KTKPTQ), and Lys-224. UTP is bound by residues 188–193 (KTKPTQ) and Lys-224. Residue 240–242 (RDA) coordinates ATP. A Glutamine amidotransferase type-1 domain is found at 292–534 (KIALVGKYVE…VKASLTNKES (243 aa)). Gly-354 is a binding site for L-glutamine. The active-site Nucleophile; for glutamine hydrolysis is the Cys-381. Residues 382–385 (LGMQ), Glu-405, and Arg-462 each bind L-glutamine. Active-site residues include His-507 and Glu-509.

The protein belongs to the CTP synthase family. In terms of assembly, homotetramer.

The enzyme catalyses UTP + L-glutamine + ATP + H2O = CTP + L-glutamate + ADP + phosphate + 2 H(+). It catalyses the reaction L-glutamine + H2O = L-glutamate + NH4(+). It carries out the reaction UTP + NH4(+) + ATP = CTP + ADP + phosphate + 2 H(+). The protein operates within pyrimidine metabolism; CTP biosynthesis via de novo pathway; CTP from UDP: step 2/2. With respect to regulation, allosterically activated by GTP, when glutamine is the substrate; GTP has no effect on the reaction when ammonia is the substrate. The allosteric effector GTP functions by stabilizing the protein conformation that binds the tetrahedral intermediate(s) formed during glutamine hydrolysis. Inhibited by the product CTP, via allosteric rather than competitive inhibition. Catalyzes the ATP-dependent amination of UTP to CTP with either L-glutamine or ammonia as the source of nitrogen. Regulates intracellular CTP levels through interactions with the four ribonucleotide triphosphates. This chain is CTP synthase, found in Bacillus anthracis (strain A0248).